The primary structure comprises 351 residues: Foldase protein PrsA 1 (351 aa).

The signal sequence occupies residues 1–22 (MKNSNKLIASVVTLASVMALAA). C23 carries the N-palmitoyl cysteine lipid modification. C23 carries the S-diacylglycerol cysteine lipid modification. Positions 145–240 (TPTMAVEMIT…KKFYIVKVTK (96 aa)) constitute a PpiC domain. 2 stretches are compositionally biased toward low complexity: residues 303 to 317 (KTKA…SESS) and 326 to 351 (ESEQ…PAAQ). Residues 303 to 351 (KTKAASESSTTSESSKAAEENPSESEQTQTSSAEEPTETEAQTQEPAAQ) form a disordered region.

It belongs to the PrsA family.

The protein localises to the cell membrane. It catalyses the reaction [protein]-peptidylproline (omega=180) = [protein]-peptidylproline (omega=0). In terms of biological role, plays a major role in protein secretion by helping the post-translocational extracellular folding of several secreted proteins. In Streptococcus pyogenes serotype M6 (strain ATCC BAA-946 / MGAS10394), this protein is Foldase protein PrsA 1.